A 776-amino-acid chain; its full sequence is MTTIHTLGYPRIGAQRELKFALESFWKGASSEDDLRATGSALRARHWAAQRDAGLDFVTVGDFAWYDQVQQTAALLGAVPTRYGFDPAQLTLAQSFVLARGNADHAAMEMTKWFDTNYHYLVPELTPDLLDRQWGPGTEWLFDEVREAQALGHRVKVVLLGPITFLHLAKARHGLADKLALLPQVLQAYTAVLQRLAALKVEWVQIDEPALVLDLPQAWVDAFGPAHQALAAAKGPKRLLATYFEAASHHAALIQSLPVDGVHLDLVRAPDQVAAFAPWSADKVLSVGVVDGRNIWRTDLTRVLAHLTPLAQALGDRLWIAPSCSLLHVPVDLSAETKLDDELKGWLAFARQKLDELAVIKRALVEGPAAVQGELDDNRIAIASRTQSRRVHNAGVKKRVAAIRAADAVRAAPYPARADAQQARLNLPLLPTTTIGSFPQTPEIRRARAQHKRGDLPALDYLQRMRTEIADVVRRQEALGLDMLVHGEAERNDMVEYFGELLWGYAFTANGWVQSYGSRCVKPPVIYGDVYRPEAMTVEWSKYAQSLTSKPMKGMLTGPVTMLQWSFVRDDQPREQTALQIALALRDEVCDLEAAGIAAIQIDEPAFREGLPLRASDVPTYLEWAARAFRVSASGVRNDTQIHTHMCYSEFNDILPAIASMDADVITIETSRSNMELLDAFAEFAYPNEIGPGVYDIHSPRVPRVDEMESLLDKAAQVVPVQRLWVNPDCGLKTRGWPEVEAALQGIVEATHRLRAKHANAKRAGSKAAHVEGEMA.

5-methyltetrahydropteroyltri-L-glutamate-binding positions include 16 to 19 (RELK) and K112. L-homocysteine contacts are provided by residues 435-437 (IGS) and E488. Residues 435–437 (IGS) and E488 each bind L-methionine. Residues 519 to 520 (RC) and W565 each bind 5-methyltetrahydropteroyltri-L-glutamate. D603 is an L-homocysteine binding site. D603 is an L-methionine binding site. E609 is a 5-methyltetrahydropteroyltri-L-glutamate binding site. Zn(2+) is bound by residues H645, C647, and E669. H698 serves as the catalytic Proton donor. A Zn(2+)-binding site is contributed by C730.

It belongs to the vitamin-B12 independent methionine synthase family. Zn(2+) serves as cofactor.

The enzyme catalyses 5-methyltetrahydropteroyltri-L-glutamate + L-homocysteine = tetrahydropteroyltri-L-glutamate + L-methionine. Its pathway is amino-acid biosynthesis; L-methionine biosynthesis via de novo pathway; L-methionine from L-homocysteine (MetE route): step 1/1. In terms of biological role, catalyzes the transfer of a methyl group from 5-methyltetrahydrofolate to homocysteine resulting in methionine formation. In Ralstonia pickettii (strain 12J), this protein is 5-methyltetrahydropteroyltriglutamate--homocysteine methyltransferase.